A 451-amino-acid polypeptide reads, in one-letter code: Phosphoglucosamine mutase (451 aa).

The active-site Phosphoserine intermediate is the Ser103. The Mg(2+) site is built by Ser103, Asp243, Asp245, and Asp247. Ser103 carries the post-translational modification Phosphoserine.

This sequence belongs to the phosphohexose mutase family. Mg(2+) serves as cofactor. Post-translationally, activated by phosphorylation.

It catalyses the reaction alpha-D-glucosamine 1-phosphate = D-glucosamine 6-phosphate. Functionally, catalyzes the conversion of glucosamine-6-phosphate to glucosamine-1-phosphate. This is Phosphoglucosamine mutase from Limosilactobacillus reuteri subsp. reuteri (strain JCM 1112) (Lactobacillus reuteri).